The following is a 162-amino-acid chain: Caveolin-2 (162 aa).

Topologically, residues 1–86 are cytoplasmic; the sequence is MGLETEKADV…FEISKYVMYK (86 aa). The residue at position 19 (Y19) is a Phosphotyrosine; by SRC. 2 positions are modified to phosphoserine: S20 and S23. A Phosphotyrosine; by SRC modification is found at Y27. A Phosphoserine modification is found at S36. Residues 87–107 constitute an intramembrane region (helical); sequence FLTVFLAIPLAFLAGILFATL. Topologically, residues 108–162 are cytoplasmic; that stretch reads SCLHIWIIMPFVKTCLMVLPSVQTIWKSVTDAIIAPLCTSIGRSFSSVSLQLSQD.

This sequence belongs to the caveolin family. Monomer or homodimer. Interacts with CAV1; the interaction forms a stable heterooligomeric complex that is required for targeting to lipid rafts and for caveolae formation. Tyrosine phosphorylated forms do not form heterooligomers with the Tyr-19-phosphorylated form existing as a monomer or dimer, and the Tyr-27-form as a monomer only. Interacts (tyrosine phosphorylated form) with the SH2 domain-containing proteins, RASA1, NCK1 and SRC. Interacts (tyrosine phosphorylated form) with INSR, the interaction (Tyr-27-phosphorylated form) is increased on insulin stimulation. Interacts (Tyr-19 phosphorylated form) with MAPK1 (phosphorylated form); the interaction, promoted by insulin, leads to nuclear location and MAPK1 activation. Interacts with STAT3; the interaction is increased on insulin-induced tyrosine phosphorylation leading to STAT activation. In terms of processing, phosphorylated on serine and tyrosine residues. CAV1 promotes phosphorylation on Ser-23 which then targets the complex to the plasma membrane, lipid rafts and caveolae. Phosphorylation on Ser-36 appears to modulate mitosis in endothelial cells. Phosphorylation on both Tyr-19 and Tyr-27 is required for insulin-induced 'Ser-727' phosphorylation of STAT3 and its activation. Phosphorylation on Tyr-19 is required for insulin-induced phosphorylation of MAPK1 and DNA binding of STAT3. Tyrosine phosphorylation is induced by both EGF and insulin (By. similarity).

It localises to the nucleus. Its subcellular location is the cytoplasm. The protein resides in the golgi apparatus membrane. It is found in the cell membrane. The protein localises to the membrane. It localises to the caveola. In terms of biological role, may act as a scaffolding protein within caveolar membranes. Interacts directly with G-protein alpha subunits and can functionally regulate their activity. Acts as an accessory protein in conjunction with CAV1 in targeting to lipid rafts and driving caveolae formation. The Ser-36 phosphorylated form has a role in modulating mitosis in endothelial cells. Positive regulator of cellular mitogenesis of the MAPK signaling pathway. Required for the insulin-stimulated nuclear translocation and activation of MAPK1 and STAT3, and the subsequent regulation of cell cycle progression. In Plecturocebus moloch (Dusky titi monkey), this protein is Caveolin-2 (CAV2).